The chain runs to 376 residues: Neuropeptide receptor 3 (376 aa).

At 1–29 (MEGGRNCVMTVQQWQPEYNDMNQIRAIFS) the chain is on the extracellular side. Residues 30–50 (LLYLLVWVGAIVGNTLVLYVL) form a helical membrane-spanning segment. Topologically, residues 51-66 (TFNQVSLSVRTVFVGC) are cytoplasmic. The helical transmembrane segment at 67 to 87 (LAGSDLLMCLFSLPITAISIF) threads the bilayer. The Extracellular segment spans residues 88–89 (SR). Residues 90–110 (VWVFPAIFCKLIGVFQGGTIF) traverse the membrane as a helical segment. A disulfide bridge connects residues Cys-98 and Cys-175. Topologically, residues 111 to 139 (VSSFTLTVIALDRCVLILRPNQEIVNFPR) are cytoplasmic. The chain crosses the membrane as a helical span at residues 140–160 (AVFIVFCIWLLGYSLALPVGI). Topologically, residues 161–197 (YSDIAVYDEICGTFCEENWPDFNPDTGRSGIRRAYGL) are extracellular. Residues 198–218 (SVLVLQFGIPALISSICYWMI) traverse the membrane as a helical segment. At 219 to 251 (SRVMSDQLARRRGHNIRPESETKLVNRKTRANR) the chain is on the cytoplasmic side. Residues 252 to 272 (MMIVMVVGFVLAWMPFNAVNL) traverse the membrane as a helical segment. The Extracellular portion of the chain corresponds to 273–284 (YRDLFGISKWYS). A helical membrane pass occupies residues 285–305 (TVFALCHVCAMCSAVLNPIIY). Topologically, residues 306–376 (SWFNPQFRQS…NDYRAGDQLL (71 aa)) are cytoplasmic.

This sequence belongs to the G-protein coupled receptor 1 family.

The protein localises to the cell membrane. G-protein coupled receptor for flp-15 neuropeptides. Receptor activation assays suggest binding to predicted flp-15 peptides, GGPQGPLRF-NH2 and RGPSGPLRF-NH2. Likely involved in Gi/Go-coupled signaling pathways. This Caenorhabditis elegans protein is Neuropeptide receptor 3.